The sequence spans 80 residues: SPbeta prophage-derived uncharacterized HTH-type transcriptional regulator YotL (80 aa).

An HTH cro/C1-type domain is found at 12–67 (LNELMHEYSVSIEDLVECTGLSKQRINDYVGGFKSNMNIGTAMTFADAIGCSIEEL). Residues 23–42 (IEDLVECTGLSKQRINDYVG) constitute a DNA-binding region (H-T-H motif).

In Bacillus subtilis (strain 168), this protein is SPbeta prophage-derived uncharacterized HTH-type transcriptional regulator YotL (yotL).